Consider the following 200-residue polypeptide: High mobility group protein B3 (200 aa).

The residue at position 3 (lysine 3) is an N6-acetyllysine. DNA-binding regions (HMG box) lie at residues 9–79 (PKGK…KDYG) and 93–161 (PKRP…ADYK). Cysteine 23 is subject to Cysteine sulfonic acid (-SO3H); alternate. A disulfide bridge connects residues cysteine 23 and cysteine 45. Lysine 30 and lysine 43 each carry N6-acetyllysine. The residue at position 45 (cysteine 45) is a Cysteine sulfonic acid (-SO3H); alternate. The segment at 71–97 (YDREMKDYGPAKGGKKKKDPNAPKRPP) is disordered. Residue serine 98 is modified to Phosphoserine. Position 104 is a cysteine sulfonic acid (-SO3H) (cysteine 104). Lysine 112 and lysine 139 each carry N6-acetyllysine. The interval 161-200 (KSKGKFDGAKGPAKVARKKVEEEEEEEEEEEEEEEEEEDE) is disordered. A compositionally biased stretch (acidic residues) spans 182–200 (EEEEEEEEEEEEEEEEEDE).

Belongs to the HMGB family. Reduction/oxidation of cysteine residues Cys-23, Cys-45 and Cys-104 and a possible intramolecular disulfide bond involving Cys-23 and Cys-45 give rise to different redox forms with specific functional activities in various cellular compartments: 1- fully reduced HMGB3 (HMGB3C23hC45hC104h), 2- disulfide HMGB3 (HMGB3C23-C45C104h) and 3- sulfonyl HMGB3 (HMGB3C23soC45soC104so). In terms of tissue distribution, expressed in bone marrow cells, specifically in primitive Lin-, c-kit+, Sca-1+, IL-7Ralpha- cells, and Ter119+ erythroid cells.

The protein localises to the nucleus. It is found in the chromosome. Its subcellular location is the cytoplasm. Its function is as follows. Multifunctional protein with various roles in different cellular compartments. May act in a redox sensitive manner. Associates with chromatin and binds DNA with a preference for non-canonical DNA structures such as single-stranded DNA. Can bend DNA and enhance DNA flexibility by looping thus providing a mechanism to promote activities on various gene promoters. Proposed to be involved in the innate immune response to nucleic acids by acting as a cytoplasmic promiscuous immunogenic DNA/RNA sensor. Negatively regulates B-cell and myeloid cell differentiation. In hematopoietic stem cells may regulate the balance between self-renewal and differentiation. Involved in negative regulation of canonical Wnt signaling. This chain is High mobility group protein B3 (Hmgb3), found in Mus musculus (Mouse).